The following is a 136-amino-acid chain: FK506-binding protein 2 (136 aa).

An N-terminal signal peptide occupies residues 1–17; sequence MLSQIWILFTFMVCVIA. Residues 45–134 enclose the PPIase FKBP-type domain; it reads GDMVSVHYTG…DFDVELVDIA (90 aa).

The protein belongs to the FKBP-type PPIase family. FKBP2 subfamily.

The protein localises to the endoplasmic reticulum. It catalyses the reaction [protein]-peptidylproline (omega=180) = [protein]-peptidylproline (omega=0). With respect to regulation, inhibited by both FK506 and rapamycin. PPIases accelerate the folding of proteins. It catalyzes the cis-trans isomerization of proline imidic peptide bonds in oligopeptides. The sequence is that of FK506-binding protein 2 (FPR2) from Candida glabrata (strain ATCC 2001 / BCRC 20586 / JCM 3761 / NBRC 0622 / NRRL Y-65 / CBS 138) (Yeast).